Consider the following 318-residue polypeptide: Glycine--tRNA ligase alpha subunit (318 aa).

This sequence belongs to the class-II aminoacyl-tRNA synthetase family. In terms of assembly, tetramer of two alpha and two beta subunits.

It is found in the cytoplasm. The enzyme catalyses tRNA(Gly) + glycine + ATP = glycyl-tRNA(Gly) + AMP + diphosphate. The polypeptide is Glycine--tRNA ligase alpha subunit (Saccharophagus degradans (strain 2-40 / ATCC 43961 / DSM 17024)).